The following is a 793-amino-acid chain: MKYNQYAYVETDFQQQVKELIDINFLPKNYQVWDFSSLLAKLVKNAIAEAKTDAAKNAKLAEFAVSDHQTLADFLKEKPTEIGTEQFYNVALQLLGYHVHYDYDFADPTGFMQRNALPFVQDISDNQKLISAFYRLLNTRAKNGQILLDVMAGKGYFTQFWGQNKFKFFNGKSIPVFDTNKVIREVVYVETDLDTDHDGKSDLIQVTVFRPEETNKGLKVPALYTASPYFGGIIANEKRNHNVDENLSDSTEWNDPQYVHSPIVKAEKPDGSSRPATEEAVHKSSYPLNEYMLARGFASVFAGAIGTRGSDGVRITGAPEETESAAAVIEWLHGDRVAYTDRTRTVQTTADWCNGNIGMTGRSYLGTLQIAIATTGVKGLKTVVSEAAISSWYDYYREHGLVIAPEACQGEDLDLLAETCQSNLWDAGSYLKIKPEYDKMQKQLREKEDRNTGQYSDFWEARNYRHHADGIKCSWISVHGLNDWNVKPKNVYKIWQLVKKMPMKHHLFLHQGPHYNMNNFVSIDFTDFMNLWFVHELLGIENNAYNQWPTVMIQDNLQADKWHEEPDWSNDLGQEKIYYPTDEGELFQDGNGKAQKSFTDVGGIEFKKAGISESDWQYKFICGDEKWAKPSLRFETDEFIHPTTIVGRPEVKVRVSASLPKGEISVALVELGERQRLTATPKFLMRGGQELGYRFGTDTLQEFVPDKKTKAKLITKAHMNLQNFKDMKKPEAIDADKFYDLDFLLQPTYYTIPSGSKLALIIYSTDQGMTKRPLEDETYTIDLANTEIKFYEK.

Catalysis depends on charge relay system residues Ser-363, Asp-483, and His-514.

The protein belongs to the peptidase S15 family. In terms of assembly, homodimer.

Its subcellular location is the cytoplasm. The catalysed reaction is Hydrolyzes Xaa-Pro-|- bonds to release unblocked, N-terminal dipeptides from substrates including Ala-Pro-|-p-nitroanilide and (sequentially) Tyr-Pro-|-Phe-Pro-|-Gly-Pro-|-Ile.. Its function is as follows. Removes N-terminal dipeptides sequentially from polypeptides having unsubstituted N-termini provided that the penultimate residue is proline. This chain is Xaa-Pro dipeptidyl-peptidase, found in Lactobacillus helveticus (strain DPC 4571).